Reading from the N-terminus, the 365-residue chain is Phospho-N-acetylmuramoyl-pentapeptide-transferase (365 aa).

Helical transmembrane passes span 19–39 (LLILLTVVLFLLMTLFQWLLT), 47–67 (AVILPVSVSAIACGLLGFGVI), 91–111 (AGTPTMGGIFFIPVAVGVALI), 115–135 (FDPQVVAVGIVTLAYMMIGWV), 155–175 (LLLQIAVAVLFCLWMLWTGSP), 184–204 (GNLIIPLGWLFWILAIFVLVA), 224–244 (AIAFLGLAAIVAPTSVGLMIF), 281–301 (AVGLLSGNLWGLFIISGIFFV), and 344–364 (TQIVGVFYLINAGLAILGFIS).

Belongs to the glycosyltransferase 4 family. MraY subfamily. Requires Mg(2+) as cofactor.

It is found in the cell inner membrane. The enzyme catalyses UDP-N-acetyl-alpha-D-muramoyl-L-alanyl-gamma-D-glutamyl-meso-2,6-diaminopimeloyl-D-alanyl-D-alanine + di-trans,octa-cis-undecaprenyl phosphate = di-trans,octa-cis-undecaprenyl diphospho-N-acetyl-alpha-D-muramoyl-L-alanyl-D-glutamyl-meso-2,6-diaminopimeloyl-D-alanyl-D-alanine + UMP. It participates in cell wall biogenesis; peptidoglycan biosynthesis. Catalyzes the initial step of the lipid cycle reactions in the biosynthesis of the cell wall peptidoglycan: transfers peptidoglycan precursor phospho-MurNAc-pentapeptide from UDP-MurNAc-pentapeptide onto the lipid carrier undecaprenyl phosphate, yielding undecaprenyl-pyrophosphoryl-MurNAc-pentapeptide, known as lipid I. This is Phospho-N-acetylmuramoyl-pentapeptide-transferase from Gloeothece citriformis (strain PCC 7424) (Cyanothece sp. (strain PCC 7424)).